We begin with the raw amino-acid sequence, 119 residues long: Fluoride-specific ion channel FluC (119 aa).

Transmembrane regions (helical) follow at residues 5–25, 30–50, 59–79, and 92–112; these read ILPL…LNLA, LSPA…IGIF, WKLL…GFSL, and SALA…WLGL. Positions 69 and 72 each coordinate Na(+).

Belongs to the fluoride channel Fluc/FEX (TC 1.A.43) family.

It localises to the cell inner membrane. It carries out the reaction fluoride(in) = fluoride(out). Na(+) is not transported, but it plays an essential structural role and its presence is essential for fluoride channel function. Fluoride-specific ion channel. Important for reducing fluoride concentration in the cell, thus reducing its toxicity. The protein is Fluoride-specific ion channel FluC of Neisseria gonorrhoeae (strain NCCP11945).